The sequence spans 113 residues: Large ribosomal subunit protein bL19 (113 aa).

Belongs to the bacterial ribosomal protein bL19 family.

This protein is located at the 30S-50S ribosomal subunit interface and may play a role in the structure and function of the aminoacyl-tRNA binding site. This Mycobacterium marinum (strain ATCC BAA-535 / M) protein is Large ribosomal subunit protein bL19.